Consider the following 367-residue polypeptide: uncharacterized protein (367 aa).

Positions 333-367 are disordered; it reads RERRPTLNAQRAHAAAQQQPRRRNRRQQGTGASAS. The segment covering 341–351 has biased composition (low complexity); the sequence is AQRAHAAAQQQ.

This is an uncharacterized protein from Amazona oratrix (yellow-headed parrot).